The sequence spans 180 residues: Hypoxanthine-guanine phosphoribosyltransferase (180 aa).

Diphosphate-binding residues include Lys-43 and Gly-44. Glu-99 and Asp-100 together coordinate Mg(2+). Asp-103 functions as the Proton acceptor in the catalytic mechanism. GMP-binding positions include Lys-131, Phe-152–Ile-153, and Asp-159. Residue Arg-165 participates in diphosphate binding.

This sequence belongs to the purine/pyrimidine phosphoribosyltransferase family. It depends on Mg(2+) as a cofactor.

The protein resides in the cytoplasm. It catalyses the reaction IMP + diphosphate = hypoxanthine + 5-phospho-alpha-D-ribose 1-diphosphate. The catalysed reaction is GMP + diphosphate = guanine + 5-phospho-alpha-D-ribose 1-diphosphate. Its pathway is purine metabolism; IMP biosynthesis via salvage pathway; IMP from hypoxanthine: step 1/1. It participates in purine metabolism; GMP biosynthesis via salvage pathway; GMP from guanine: step 1/1. Functionally, purine salvage pathway enzyme that catalyzes the transfer of the ribosyl-5-phosphate group from 5-phospho-alpha-D-ribose 1-diphosphate (PRPP) to the N9 position of the 6-oxopurines hypoxanthine and guanine to form the corresponding ribonucleotides IMP (inosine 5'-monophosphate) and GMP (guanosine 5'-monophosphate), with the release of PPi. This is Hypoxanthine-guanine phosphoribosyltransferase (hpt) from Streptococcus pyogenes serotype M3 (strain ATCC BAA-595 / MGAS315).